A 342-amino-acid polypeptide reads, in one-letter code: AA9 family lytic polysaccharide monooxygenase AA9-X282 (342 aa).

Positions Met1–Ala18 are cleaved as a signal peptide. His17 contacts Cu(2+). A phosphothreonine mark is found at Thr19 and Thr57. Ser59 carries the post-translational modification Phosphoserine. The cysteines at positions 63 and 181 are disulfide-linked. His93 lines the Cu(2+) pocket. The O2 site is built by His167 and Gln176. Position 178 (Tyr178) interacts with Cu(2+). N-linked (GlcNAc...) asparagine glycosylation is present at Asn189. The tract at residues Ser233–Pro263 is X282 extension. The segment at Val281 to Pro302 is disordered. Pro residues predominate over residues Pro285–Pro302. The CBM1 domain maps to Pro306 to Leu342.

This sequence belongs to the polysaccharide monooxygenase AA9 family. It depends on Cu(2+) as a cofactor.

The protein localises to the secreted. It catalyses the reaction [(1-&gt;4)-beta-D-glucosyl]n+m + reduced acceptor + O2 = 4-dehydro-beta-D-glucosyl-[(1-&gt;4)-beta-D-glucosyl]n-1 + [(1-&gt;4)-beta-D-glucosyl]m + acceptor + H2O.. Functionally, lytic polysaccharide monooxygenase (LPMO) that depolymerizes crystalline and amorphous polysaccharides via the oxidation of scissile alpha- or beta-(1-4)-glycosidic bonds, yielding C1 oxidation products. Catalysis by LPMOs requires the reduction of the active-site copper from Cu(II) to Cu(I) by a reducing agent and H(2)O(2) or O(2) as a cosubstrate. Shows only weak binding properties to cellulose, and low cellulolytic oxidative activity which questions the involvement of X282 extension-containing AA9 proteins in the degradation of plant cell wall and opens new avenues as to the divergence of function of some AA9 members. This Coprinopsis cinerea (strain Okayama-7 / 130 / ATCC MYA-4618 / FGSC 9003) (Inky cap fungus) protein is AA9 family lytic polysaccharide monooxygenase AA9-X282.